Consider the following 465-residue polypeptide: Mitochondrial F-box protein MFB1 (465 aa).

The F-box domain occupies 14-60; that stretch reads ERSLTNLPLNLLFRILSHLDMNDLQNIGKTCTLLRMLANENIVYRNA. A disordered region spans residues 253–279; the sequence is FTKSRDPDYKEMTPTSTESSDSITRLR. A compositionally biased stretch (basic and acidic residues) spans 254-263; that stretch reads TKSRDPDYKE. Residues 265 to 275 show a composition bias toward polar residues; it reads TPTSTESSDSI.

The protein localises to the mitochondrion. This Saccharomyces cerevisiae (strain ATCC 204508 / S288c) (Baker's yeast) protein is Mitochondrial F-box protein MFB1 (MFB1).